A 230-amino-acid chain; its full sequence is Orotidine 5'-phosphate decarboxylase (230 aa).

Substrate-binding positions include Asp11, Lys34, 61-70 (DLKLHDIPNT), Thr117, Arg179, Gln188, Gly208, and Arg209. The Proton donor role is filled by Lys63.

The protein belongs to the OMP decarboxylase family. Type 1 subfamily. In terms of assembly, homodimer.

It carries out the reaction orotidine 5'-phosphate + H(+) = UMP + CO2. The protein operates within pyrimidine metabolism; UMP biosynthesis via de novo pathway; UMP from orotate: step 2/2. Catalyzes the decarboxylation of orotidine 5'-monophosphate (OMP) to uridine 5'-monophosphate (UMP). This is Orotidine 5'-phosphate decarboxylase from Streptococcus gordonii (strain Challis / ATCC 35105 / BCRC 15272 / CH1 / DL1 / V288).